The chain runs to 44 residues: Photosystem II reaction center protein K (44 aa).

The propeptide occupies 1 to 7 (MTTLLLA). The chain crosses the membrane as a helical span at residues 19-39 (IVDVLPVIPLLFLLLAFVWQA).

This sequence belongs to the PsbK family. As to quaternary structure, PSII is composed of 1 copy each of membrane proteins PsbA, PsbB, PsbC, PsbD, PsbE, PsbF, PsbH, PsbI, PsbJ, PsbK, PsbL, PsbM, PsbT, PsbX, PsbY, PsbZ, Psb30/Ycf12, at least 3 peripheral proteins of the oxygen-evolving complex and a large number of cofactors. It forms dimeric complexes.

The protein localises to the plastid. The protein resides in the chloroplast thylakoid membrane. In terms of biological role, one of the components of the core complex of photosystem II (PSII). PSII is a light-driven water:plastoquinone oxidoreductase that uses light energy to abstract electrons from H(2)O, generating O(2) and a proton gradient subsequently used for ATP formation. It consists of a core antenna complex that captures photons, and an electron transfer chain that converts photonic excitation into a charge separation. The chain is Photosystem II reaction center protein K from Tupiella akineta (Green alga).